The sequence spans 273 residues: Dermonecrotic toxin LarSicTox-alphaIB1aiv (273 aa).

His5 is an active-site residue. Positions 25 and 27 each coordinate Mg(2+). His41 serves as the catalytic Nucleophile. Intrachain disulfides connect Cys45–Cys51 and Cys47–Cys190. Position 85 (Asp85) interacts with Mg(2+). Asn250 carries N-linked (GlcNAc...) asparagine glycosylation.

The protein belongs to the arthropod phospholipase D family. Class II subfamily. The cofactor is Mg(2+). As to expression, expressed by the venom gland.

Its subcellular location is the secreted. The enzyme catalyses an N-(acyl)-sphingosylphosphocholine = an N-(acyl)-sphingosyl-1,3-cyclic phosphate + choline. It catalyses the reaction an N-(acyl)-sphingosylphosphoethanolamine = an N-(acyl)-sphingosyl-1,3-cyclic phosphate + ethanolamine. It carries out the reaction a 1-acyl-sn-glycero-3-phosphocholine = a 1-acyl-sn-glycero-2,3-cyclic phosphate + choline. The catalysed reaction is a 1-acyl-sn-glycero-3-phosphoethanolamine = a 1-acyl-sn-glycero-2,3-cyclic phosphate + ethanolamine. In terms of biological role, dermonecrotic toxins cleave the phosphodiester linkage between the phosphate and headgroup of certain phospholipids (sphingolipid and lysolipid substrates), forming an alcohol (often choline) and a cyclic phosphate. This toxin acts on sphingomyelin (SM). It may also act on ceramide phosphoethanolamine (CPE), lysophosphatidylcholine (LPC) and lysophosphatidylethanolamine (LPE), but not on lysophosphatidylserine (LPS), and lysophosphatidylglycerol (LPG). It acts by transphosphatidylation, releasing exclusively cyclic phosphate products as second products. Induces dermonecrosis, hemolysis, increased vascular permeability, edema, inflammatory response, and platelet aggregation. This is Dermonecrotic toxin LarSicTox-alphaIB1aiv from Loxosceles arizonica (Arizona brown spider).